Consider the following 320-residue polypeptide: F-box protein At2g02240 (320 aa).

In terms of domain architecture, F-box spans threonine 58–phenylalanine 104.

The chain is F-box protein At2g02240 from Arabidopsis thaliana (Mouse-ear cress).